The chain runs to 263 residues: 3-methyl-2-oxobutanoate hydroxymethyltransferase 2 (263 aa).

Mg(2+)-binding residues include aspartate 45 and aspartate 84. 3-methyl-2-oxobutanoate-binding positions include 45–46 (DS), aspartate 84, and lysine 112. Position 114 (glutamate 114) interacts with Mg(2+). Residue glutamate 181 is the Proton acceptor of the active site.

This sequence belongs to the PanB family. As to quaternary structure, homodecamer; pentamer of dimers. It depends on Mg(2+) as a cofactor.

It is found in the cytoplasm. The catalysed reaction is 3-methyl-2-oxobutanoate + (6R)-5,10-methylene-5,6,7,8-tetrahydrofolate + H2O = 2-dehydropantoate + (6S)-5,6,7,8-tetrahydrofolate. It participates in cofactor biosynthesis; (R)-pantothenate biosynthesis; (R)-pantoate from 3-methyl-2-oxobutanoate: step 1/2. In terms of biological role, catalyzes the reversible reaction in which hydroxymethyl group from 5,10-methylenetetrahydrofolate is transferred onto alpha-ketoisovalerate to form ketopantoate. This Aliivibrio fischeri (strain ATCC 700601 / ES114) (Vibrio fischeri) protein is 3-methyl-2-oxobutanoate hydroxymethyltransferase 2.